The following is a 172-amino-acid chain: NADH-ubiquinone oxidoreductase chain 6 (172 aa).

5 consecutive transmembrane segments (helical) span residues 1–21 (MTYF…AVAS), 27–47 (YGVV…LSLG), 48–68 (ISFV…VVFV), 87–107 (VVGY…VGGF), and 138–158 (CGVG…FVVL).

The protein belongs to the complex I subunit 6 family.

Its subcellular location is the mitochondrion membrane. It catalyses the reaction a ubiquinone + NADH + 5 H(+)(in) = a ubiquinol + NAD(+) + 4 H(+)(out). Core subunit of the mitochondrial membrane respiratory chain NADH dehydrogenase (Complex I) that is believed to belong to the minimal assembly required for catalysis. Complex I functions in the transfer of electrons from NADH to the respiratory chain. The immediate electron acceptor for the enzyme is believed to be ubiquinone. This Uria aalge (Common mure) protein is NADH-ubiquinone oxidoreductase chain 6 (MT-ND6).